The primary structure comprises 863 residues: Probable beta-glucosidase A (863 aa).

An N-terminal signal peptide occupies residues 1–19; the sequence is MKLGWLEAAALTAASVASA. Residues Asn-65, Asn-214, and Asn-255 are each glycosylated (N-linked (GlcNAc...) asparagine). Asp-283 is an active-site residue. N-linked (GlcNAc...) asparagine glycans are attached at residues Asn-318, Asn-325, Asn-357, Asn-493, Asn-526, Asn-545, Asn-567, Asn-664, and Asn-715. The segment at 720-754 is disordered; that stretch reads KESSGDPNYGWDDEDYIPEGAKDGSPQDVLPSGGG.

The protein belongs to the glycosyl hydrolase 3 family.

It is found in the secreted. The catalysed reaction is Hydrolysis of terminal, non-reducing beta-D-glucosyl residues with release of beta-D-glucose.. Its pathway is glycan metabolism; cellulose degradation. In terms of biological role, beta-glucosidases are one of a number of cellulolytic enzymes involved in the degradation of cellulosic biomass. Catalyzes the last step releasing glucose from the inhibitory cellobiose. The protein is Probable beta-glucosidase A (bglA) of Emericella nidulans (strain FGSC A4 / ATCC 38163 / CBS 112.46 / NRRL 194 / M139) (Aspergillus nidulans).